The following is a 438-amino-acid chain: Serine hydroxymethyltransferase (438 aa).

(6S)-5,6,7,8-tetrahydrofolate-binding positions include Leu-133 and 137–139; that span reads GHL. The residue at position 242 (Lys-242) is an N6-(pyridoxal phosphate)lysine.

This sequence belongs to the SHMT family. In terms of assembly, homodimer. It depends on pyridoxal 5'-phosphate as a cofactor.

The protein localises to the cytoplasm. The enzyme catalyses (6R)-5,10-methylene-5,6,7,8-tetrahydrofolate + glycine + H2O = (6S)-5,6,7,8-tetrahydrofolate + L-serine. Its pathway is one-carbon metabolism; tetrahydrofolate interconversion. It participates in amino-acid biosynthesis; glycine biosynthesis; glycine from L-serine: step 1/1. Functionally, catalyzes the reversible interconversion of serine and glycine with tetrahydrofolate (THF) serving as the one-carbon carrier. This reaction serves as the major source of one-carbon groups required for the biosynthesis of purines, thymidylate, methionine, and other important biomolecules. Also exhibits THF-independent aldolase activity toward beta-hydroxyamino acids, producing glycine and aldehydes, via a retro-aldol mechanism. This is Serine hydroxymethyltransferase from Brucella melitensis biotype 2 (strain ATCC 23457).